A 154-amino-acid polypeptide reads, in one-letter code: Myoglobin (154 aa).

The Globin domain maps to 2 to 148 (GLSDGEWHLV…FRNDIAAKIK (147 aa)). The residue at position 4 (Ser-4) is a Phosphoserine. His-65 is a nitrite binding site. O2 is bound at residue His-65. Position 68 is a phosphothreonine (Thr-68). His-94 contacts heme b.

The protein belongs to the globin family. Monomeric.

Its subcellular location is the cytoplasm. It localises to the sarcoplasm. It catalyses the reaction Fe(III)-heme b-[protein] + nitric oxide + H2O = Fe(II)-heme b-[protein] + nitrite + 2 H(+). The catalysed reaction is H2O2 + AH2 = A + 2 H2O. Monomeric heme protein which primary function is to store oxygen and facilitate its diffusion within muscle tissues. Reversibly binds oxygen through a pentacoordinated heme iron and enables its timely and efficient release as needed during periods of heightened demand. Depending on the oxidative conditions of tissues and cells, and in addition to its ability to bind oxygen, it also has a nitrite reductase activity whereby it regulates the production of bioactive nitric oxide. Under stress conditions, like hypoxia and anoxia, it also protects cells against reactive oxygen species thanks to its pseudoperoxidase activity. This chain is Myoglobin (MB), found in Pusa sibirica (Baikal seal).